Consider the following 347-residue polypeptide: 4-hydroxyproline 2-epimerase (347 aa).

Residue Gln-85 participates in substrate binding. Residue Ser-93 is the Proton acceptor of the active site. Residues Gly-94–Ser-95 and Asp-251 contribute to the substrate site. Cys-255 functions as the Proton donor in the catalytic mechanism. Gly-256 to Thr-257 provides a ligand contact to substrate.

It belongs to the proline racemase family.

It catalyses the reaction trans-4-hydroxy-L-proline = cis-4-hydroxy-D-proline. Functionally, catalyzes the epimerization of trans-4-hydroxy-L-proline (t4LHyp) to cis-4-hydroxy-D-proline (c4DHyp). May be involved in a degradation pathway of t4LHyp. Can also catalyze the epimerization of trans-3-hydroxy-L-proline (t3LHyp) to cis-3-hydroxy-D-proline (c3DHyp) in vitro. Displays no proline racemase activity. In Allorhizobium ampelinum (strain ATCC BAA-846 / DSM 112012 / S4) (Agrobacterium vitis (strain S4)), this protein is 4-hydroxyproline 2-epimerase.